The sequence spans 36 residues: Glucagon-1 (36 aa).

It belongs to the glucagon family.

The protein resides in the secreted. Functionally, promotes hydrolysis of glycogen and lipids, and raises the blood sugar level. The protein is Glucagon-1 (gcg1) of Oreochromis niloticus (Nile tilapia).